Here is a 461-residue protein sequence, read N- to C-terminus: Phosphoglucosamine mutase (461 aa).

Serine 107 acts as the Phosphoserine intermediate in catalysis. Residues serine 107, aspartate 254, aspartate 256, and aspartate 258 each contribute to the Mg(2+) site. Serine 107 carries the post-translational modification Phosphoserine.

The protein belongs to the phosphohexose mutase family. Mg(2+) is required as a cofactor. Post-translationally, activated by phosphorylation.

The catalysed reaction is alpha-D-glucosamine 1-phosphate = D-glucosamine 6-phosphate. Catalyzes the conversion of glucosamine-6-phosphate to glucosamine-1-phosphate. In Bifidobacterium longum subsp. infantis (strain ATCC 15697 / DSM 20088 / JCM 1222 / NCTC 11817 / S12), this protein is Phosphoglucosamine mutase.